A 62-amino-acid chain; its full sequence is Photosystem II reaction center protein Z (62 aa).

2 helical membrane-spanning segments follow: residues 8-28 (ALFA…VVLA) and 41-61 (FSGI…NSFV).

This sequence belongs to the PsbZ family. As to quaternary structure, PSII is composed of 1 copy each of membrane proteins PsbA, PsbB, PsbC, PsbD, PsbE, PsbF, PsbH, PsbI, PsbJ, PsbK, PsbL, PsbM, PsbT, PsbY, PsbZ, Psb30/Ycf12, at least 3 peripheral proteins of the oxygen-evolving complex and a large number of cofactors. It forms dimeric complexes.

It is found in the plastid. The protein localises to the chloroplast thylakoid membrane. Functionally, may control the interaction of photosystem II (PSII) cores with the light-harvesting antenna, regulates electron flow through the 2 photosystem reaction centers. PSII is a light-driven water plastoquinone oxidoreductase, using light energy to abstract electrons from H(2)O, generating a proton gradient subsequently used for ATP formation. The chain is Photosystem II reaction center protein Z from Chlorella vulgaris (Green alga).